The sequence spans 200 residues: Dephospho-CoA kinase (200 aa).

Residues 3 to 200 (VLGLTGSIGM…LSGKPAAATR (198 aa)) enclose the DPCK domain. 11–16 (GMGKTT) lines the ATP pocket.

This sequence belongs to the CoaE family.

It localises to the cytoplasm. The catalysed reaction is 3'-dephospho-CoA + ATP = ADP + CoA + H(+). It participates in cofactor biosynthesis; coenzyme A biosynthesis; CoA from (R)-pantothenate: step 5/5. In terms of biological role, catalyzes the phosphorylation of the 3'-hydroxyl group of dephosphocoenzyme A to form coenzyme A. In Brucella abortus (strain 2308), this protein is Dephospho-CoA kinase.